Here is a 123-residue protein sequence, read N- to C-terminus: Small ribosomal subunit protein uS12 (123 aa).

Residue Asp89 is modified to 3-methylthioaspartic acid.

The protein belongs to the universal ribosomal protein uS12 family. In terms of assembly, part of the 30S ribosomal subunit. Contacts proteins S8 and S17. May interact with IF1 in the 30S initiation complex.

In terms of biological role, with S4 and S5 plays an important role in translational accuracy. Interacts with and stabilizes bases of the 16S rRNA that are involved in tRNA selection in the A site and with the mRNA backbone. Located at the interface of the 30S and 50S subunits, it traverses the body of the 30S subunit contacting proteins on the other side and probably holding the rRNA structure together. The combined cluster of proteins S8, S12 and S17 appears to hold together the shoulder and platform of the 30S subunit. The sequence is that of Small ribosomal subunit protein uS12 from Rhodopseudomonas palustris (strain HaA2).